A 211-amino-acid chain; its full sequence is Protein CHLORORESPIRATORY REDUCTION 41, chloroplastic (211 aa).

A chloroplast-targeting transit peptide spans 1–38 (MASTSTLLLPSLSSKNLHIAVPIRTNSFVRRTTKFSTK). Residues 136 to 163 (AKAGEIVAERAREEAEVLRDEGKVEERM) adopt a coiled-coil conformation.

Biogenesis factor component of the plastidial NDH subcomplex A.

It is found in the plastid. The protein localises to the chloroplast. The protein resides in the chloroplast stroma. Its function is as follows. Required for both formation and activity of the chloroplast NAD(P)H dehydrogenase (NDH) complex of the photosynthetic electron transport chain. Functions in assembly or stabilization of the NDH complex; probably involved, together with NdhO and NdhH, in the formation of an NDH subcomplex A assembly intermediate (NAI500). This is Protein CHLORORESPIRATORY REDUCTION 41, chloroplastic from Arabidopsis thaliana (Mouse-ear cress).